The chain runs to 313 residues: Homoserine O-succinyltransferase (313 aa).

Residue C142 is the Acyl-thioester intermediate of the active site. 2 residues coordinate substrate: K163 and S192. The Proton acceptor role is filled by H235. E237 is an active-site residue. R249 serves as a coordination point for substrate.

Belongs to the MetA family.

It localises to the cytoplasm. It carries out the reaction L-homoserine + succinyl-CoA = O-succinyl-L-homoserine + CoA. It functions in the pathway amino-acid biosynthesis; L-methionine biosynthesis via de novo pathway; O-succinyl-L-homoserine from L-homoserine: step 1/1. In terms of biological role, transfers a succinyl group from succinyl-CoA to L-homoserine, forming succinyl-L-homoserine. The chain is Homoserine O-succinyltransferase from Shewanella sp. (strain MR-4).